The sequence spans 458 residues: MSDLLSVFLHLLLLFKLVAPVTFRHHRYDDLVRTLYKVQNECPGITRVYSIGRSVEGRHLYVLEFSDHPGIHEPLEPEVKYVGNMHGNEALGRELMLQLSEFLCEEFRNRNQRIVQLIQDTRIHILPSMNPDGYEVAAAQGPNKPGYLVGRNNANGVDLNRNFPDLNTYIYYNEKYGGPNHHLPLPDNWKSQVEPETRAVIRWMHSFNFVLSANLHGGAVVANYPYDKSFEHRVRGVRRTASTPTPDDKLFQKLAKVYSYAHGWMFQGWNCGDYFPDGITNGASWYSLSKGMQDFNYLHTNCFEITLELSCDKFPPEEELQREWLGNREALIQFLEQVHQGIKGMVLDENYNNLANAVISVSGINHDVTSGDHGDYFRLLLPGIYTVSATAPGYDPETVTVTVGPAEPTLVNFHLKRSIPQVSPVRRAPSRRHGVRAKVQPQARKKEMEMRQLQRGPA.

Positions 1–20 are cleaved as a signal peptide; that stretch reads MSDLLSVFLHLLLLFKLVAP. The Peptidase M14 domain occupies 24-338; sequence RHHRYDDLVR…EALIQFLEQV (315 aa). Cysteine 42 and cysteine 104 are joined by a disulfide. Residues histidine 86, glutamate 89, and histidine 216 each coordinate Zn(2+). A disulfide bridge links cysteine 271 with cysteine 311. Glutamate 308 functions as the Proton donor/acceptor in the catalytic mechanism. O-linked (GalNAc...) threonine glycans are attached at residues threonine 400, threonine 402, and threonine 409. The interval 423-458 is disordered; that stretch reads SPVRRAPSRRHGVRAKVQPQARKKEMEMRQLQRGPA.

It belongs to the peptidase M14 family. As to quaternary structure, tetramer of two catalytic chains and two glycosylated inactive chains. It depends on Zn(2+) as a cofactor. As to expression, synthesized in the liver and secreted in plasma.

Its subcellular location is the secreted. The protein localises to the extracellular space. It carries out the reaction Release of a C-terminal basic amino acid, preferentially lysine.. In terms of biological role, protects the body from potent vasoactive and inflammatory peptides containing C-terminal Arg or Lys (such as kinins or anaphylatoxins) which are released into the circulation. The polypeptide is Carboxypeptidase N catalytic chain (CPN1) (Homo sapiens (Human)).